The chain runs to 343 residues: Polyprenal reductase 2 (343 aa).

The next 6 helical transmembrane spans lie at 12–32 (GAWI…SIPT), 66–86 (FAHF…ATWM), 164–184 (MHIL…LSLC), 223–243 (PLMK…WGWI), 266–286 (IIPY…AEIV), and 291–311 (LLIA…FVAA).

The protein belongs to the steroid 5-alpha reductase family. Polyprenal reductase subfamily. In terms of tissue distribution, expressed in roots, leaves, stems and flowers.

The protein localises to the endoplasmic reticulum membrane. It carries out the reaction a di-trans,poly-cis-dolichal + NADP(+) = a di-trans,poly-cis-polyprenal + NADPH + H(+). Its pathway is protein modification; protein glycosylation. Its function is as follows. Plays a key role in early steps of protein N-linked glycosylation by being involved in the conversion of polyprenol into dolichol. Acts as a polyprenal reductase that mediates the reduction of polyprenal into dolichal in a NADP-dependent mechanism. Dolichols are required for the synthesis of dolichol-linked monosaccharides and the oligosaccharide precursor used for N-glycosylation. Involved in the regulation of plant growth and reproductive processes. The chain is Polyprenal reductase 2 from Arabidopsis thaliana (Mouse-ear cress).